The chain runs to 561 residues: Transmembrane protein 209 (561 aa).

Residues Ser9 and Ser11 each carry the phosphoserine modification. Residues 28–48 form a helical membrane-spanning segment; that stretch reads VVLAWGLLNVSMAGMIYTEMT. The N-linked (GlcNAc...) asparagine glycan is linked to Asn57. Residues 60–80 form a helical membrane-spanning segment; the sequence is YWPLWYIELALASLFSLNALF. Residue Ser98 is modified to Phosphoserine. 2 disordered regions span residues 119–157 and 195–234; these read DLAA…FTTS and FSPS…DKED. Over residues 133–157 the composition is skewed to low complexity; that stretch reads SIQGQSVLSYSPSRSPSTSPKFTTS. Phosphoserine occurs at positions 201, 222, and 248. Positions 220–229 are enriched in polar residues; it reads RSSPTVYNSP. Residues 250 to 271 are disordered; it reads EEKQHRVKLGSPDSTSPSSSPT. Positions 260 to 271 are enriched in low complexity; it reads SPDSTSPSSSPT. An N-linked (GlcNAc...) asparagine glycan is attached at Asn274. The residue at position 278 (Ser278) is a Phosphoserine.

As to quaternary structure, interacts with NUP205. Expressed in the testis.

Its subcellular location is the membrane. The protein resides in the nucleus envelope. It is found in the golgi apparatus. The protein localises to the cytoplasm. Nuclear envelope protein which in association with NUP205, may be involved in nuclear transport of various nuclear proteins in addition to MYC. The protein is Transmembrane protein 209 (TMEM209) of Homo sapiens (Human).